A 274-amino-acid polypeptide reads, in one-letter code: Nitrogenase iron protein (274 aa).

8-15 (GKGGIGKS) is an ATP binding site. Cysteine 94 serves as a coordination point for [4Fe-4S] cluster. ADP-ribosylarginine; by dinitrogenase reductase ADP-ribosyltransferase is present on arginine 97. Cysteine 129 serves as a coordination point for [4Fe-4S] cluster.

The protein belongs to the NifH/BchL/ChlL family. As to quaternary structure, homodimer. The cofactor is [4Fe-4S] cluster. The reversible ADP-ribosylation of Arg-97 inactivates the nitrogenase reductase and regulates nitrogenase activity.

It catalyses the reaction N2 + 8 reduced [2Fe-2S]-[ferredoxin] + 16 ATP + 16 H2O = H2 + 8 oxidized [2Fe-2S]-[ferredoxin] + 2 NH4(+) + 16 ADP + 16 phosphate + 6 H(+). Functionally, the key enzymatic reactions in nitrogen fixation are catalyzed by the nitrogenase complex, which has 2 components: the iron protein and the molybdenum-iron protein. The sequence is that of Nitrogenase iron protein from Methanocella arvoryzae (strain DSM 22066 / NBRC 105507 / MRE50).